A 22-amino-acid polypeptide reads, in one-letter code: 65 kDa membrane protein (22 aa).

The interval 1–22 (AAKPLDKSSSSLHHGYSKVHVP) is disordered.

The protein localises to the cell membrane. Its function is as follows. Binds various plasma and ECM-proteins. The sequence is that of 65 kDa membrane protein from Staphylococcus aureus.